The primary structure comprises 374 residues: MNSIVSTVRGILTLSRSETFDSPRDEAKSDLKVLSVAWNQVCSGFIVGTNHGFNVYSCKPMIKKSISRAPHESGFKVAEMLFLSNLFAFVGNGYNNSEYPPNKVFVWDDYRNCCLSELTFKSEVIAVKLAREHVVVVLKQNIYVYTFNNLKVDRVIETLMNPKGLCCVTHVESKAVLACPGFHPGQVQVHDLRWNVIKFIKAHDSAIACMTLTLDGSLLATASTKGTLIRIFNAVDGTLLQEFRRGVERAEIYNVAISSNLKWVAASSEKGTLHVFRLRPDILSFDPASSSSFIRVILPKYLYENERSFAQFSLPASTKFIVGFGSENTVLLVGIDGSFRRCKFDHADGGQMVELEHKYFFSLQETGNTMVGGV.

WD repeat units lie at residues 28–66 (KSDLKVLSVAWNQVCSGFIVGTNHGFNVYSCKPMIKKSI), 72–117 (ESGF…CLSE), 202–242 (AHDS…LLQE), and 247–286 (VERAEIYNVAISSNLKWVAASSEKGTLHVFRLRPDILSFD).

The protein belongs to the WD repeat PROPPIN family. Component of the PI(3,5)P2 regulatory complex at least composed of ATG18, SAC/FIG4, FAB1 and VAC14.

It is found in the preautophagosomal structure membrane. It localises to the vacuole membrane. In terms of biological role, the PI(3,5)P2 regulatory complex regulates both the synthesis and turnover of phosphatidylinositol 3,5-bisphosphate (PtdIns(3,5)P2). Required for autophagy. The polypeptide is Autophagy-related protein 18e (ATG18E) (Arabidopsis thaliana (Mouse-ear cress)).